Reading from the N-terminus, the 53-residue chain is 20 kDa chaperonin (53 aa).

2 cpn-10 domain regions span residues 1 to 10 (YTSIKPLGDR) and 11 to 53 (VAEA…KITP).

It belongs to the GroES chaperonin family. In terms of assembly, forms stable complexes with cpn60 in the presence of ATP. Homotetramer.

The protein localises to the plastid. It is found in the chloroplast. Functionally, seems to function only as a co-chaperone, along with cpn60, and in certain cases is essential for the discharge of biologically active proteins from cpn60. This is 20 kDa chaperonin from Populus euphratica (Euphrates poplar).